The primary structure comprises 156 residues: Small ribosomal subunit protein uS7 (156 aa).

Belongs to the universal ribosomal protein uS7 family. In terms of assembly, part of the 30S ribosomal subunit. Contacts proteins S9 and S11.

In terms of biological role, one of the primary rRNA binding proteins, it binds directly to 16S rRNA where it nucleates assembly of the head domain of the 30S subunit. Is located at the subunit interface close to the decoding center, probably blocks exit of the E-site tRNA. This Maridesulfovibrio salexigens (strain ATCC 14822 / DSM 2638 / NCIMB 8403 / VKM B-1763) (Desulfovibrio salexigens) protein is Small ribosomal subunit protein uS7.